The following is a 271-amino-acid chain: Phosphatidylglycerol--prolipoprotein diacylglyceryl transferase (271 aa).

4 helical membrane-spanning segments follow: residues 25 to 45 (WYGI…KFFV), 60 to 80 (YFIW…ILIY), 103 to 123 (FVGI…IATL), and 131 to 151 (ANPW…YVFG). Residue Arg-152 participates in a 1,2-diacyl-sn-glycero-3-phospho-(1'-sn-glycerol) binding. A run of 3 helical transmembrane segments spans residues 181-201 (PSQL…VYLA), 209-229 (GELI…CEFY), and 235-255 (GIGF…IMFI).

This sequence belongs to the Lgt family.

Its subcellular location is the cell inner membrane. It carries out the reaction L-cysteinyl-[prolipoprotein] + a 1,2-diacyl-sn-glycero-3-phospho-(1'-sn-glycerol) = an S-1,2-diacyl-sn-glyceryl-L-cysteinyl-[prolipoprotein] + sn-glycerol 1-phosphate + H(+). It functions in the pathway protein modification; lipoprotein biosynthesis (diacylglyceryl transfer). In terms of biological role, catalyzes the transfer of the diacylglyceryl group from phosphatidylglycerol to the sulfhydryl group of the N-terminal cysteine of a prolipoprotein, the first step in the formation of mature lipoproteins. In Campylobacter jejuni (strain RM1221), this protein is Phosphatidylglycerol--prolipoprotein diacylglyceryl transferase.